The chain runs to 652 residues: DNA ligase (652 aa).

NAD(+) contacts are provided by residues 29–33 (DSEYD), 78–79 (SL), and Glu-107. Catalysis depends on Lys-109, which acts as the N6-AMP-lysine intermediate. Residues Arg-130, Glu-164, Lys-278, and Lys-302 each coordinate NAD(+). Positions 395, 398, 413, and 418 each coordinate Zn(2+). The 76-residue stretch at 577 to 652 (DQQAALFGLT…IEDEDWLLNL (76 aa)) folds into the BRCT domain.

This sequence belongs to the NAD-dependent DNA ligase family. LigA subfamily. Requires Mg(2+) as cofactor. Mn(2+) is required as a cofactor.

The catalysed reaction is NAD(+) + (deoxyribonucleotide)n-3'-hydroxyl + 5'-phospho-(deoxyribonucleotide)m = (deoxyribonucleotide)n+m + AMP + beta-nicotinamide D-nucleotide.. DNA ligase that catalyzes the formation of phosphodiester linkages between 5'-phosphoryl and 3'-hydroxyl groups in double-stranded DNA using NAD as a coenzyme and as the energy source for the reaction. It is essential for DNA replication and repair of damaged DNA. The polypeptide is DNA ligase (Streptococcus equi subsp. equi (strain 4047)).